The following is a 381-amino-acid chain: Acetylornithine deacetylase (381 aa).

His79 is a Zn(2+) binding site. Asp81 is an active-site residue. Asp111 contributes to the Zn(2+) binding site. Residue Glu143 is part of the active site. Zn(2+) is bound by residues Glu144, Glu168, and His354.

Belongs to the peptidase M20A family. ArgE subfamily. Homodimer. Requires Zn(2+) as cofactor. Co(2+) is required as a cofactor. It depends on glutathione as a cofactor.

Its subcellular location is the cytoplasm. The enzyme catalyses N(2)-acetyl-L-ornithine + H2O = L-ornithine + acetate. Its pathway is amino-acid biosynthesis; L-arginine biosynthesis; L-ornithine from N(2)-acetyl-L-ornithine (linear): step 1/1. Functionally, catalyzes the hydrolysis of the amide bond of N(2)-acetylated L-amino acids. Cleaves the acetyl group from N-acetyl-L-ornithine to form L-ornithine, an intermediate in L-arginine biosynthesis pathway, and a branchpoint in the synthesis of polyamines. This Buchnera aphidicola subsp. Schizaphis graminum (strain Sg) protein is Acetylornithine deacetylase.